Consider the following 73-residue polypeptide: DNA-directed RNA polymerase subunit epsilon (73 aa).

It belongs to the RNA polymerase subunit epsilon family. As to quaternary structure, RNAP is composed of a core of 2 alpha, a beta and a beta' subunit. The core is associated with a delta subunit, and at least one of epsilon or omega. When a sigma factor is associated with the core the holoenzyme is formed, which can initiate transcription.

The catalysed reaction is RNA(n) + a ribonucleoside 5'-triphosphate = RNA(n+1) + diphosphate. Its function is as follows. A non-essential component of RNA polymerase (RNAP). The protein is DNA-directed RNA polymerase subunit epsilon of Lactobacillus helveticus (strain DPC 4571).